A 551-amino-acid chain; its full sequence is Chaperonin GroEL (551 aa).

Residues Thr-30–Pro-33, Lys-51, Asp-87–Thr-91, Gly-415, Asn-478–Ala-480, and Asp-494 contribute to the ATP site.

It belongs to the chaperonin (HSP60) family. In terms of assembly, forms a cylinder of 14 subunits composed of two heptameric rings stacked back-to-back. Interacts with the co-chaperonin GroES.

The protein resides in the cytoplasm. The enzyme catalyses ATP + H2O + a folded polypeptide = ADP + phosphate + an unfolded polypeptide.. In terms of biological role, together with its co-chaperonin GroES, plays an essential role in assisting protein folding. The GroEL-GroES system forms a nano-cage that allows encapsulation of the non-native substrate proteins and provides a physical environment optimized to promote and accelerate protein folding. The protein is Chaperonin GroEL of Syntrophotalea carbinolica (strain DSM 2380 / NBRC 103641 / GraBd1) (Pelobacter carbinolicus).